A 228-amino-acid polypeptide reads, in one-letter code: MQSMILFAAALMGAAVNGFVLPRTDDPDCETKATDCGSTSNIKYTVVKGDTLTSIAKKFKSGICNIVSVNKLANPNLIELGATLIIPENCSNPDNKSCVSTPAEPTETCVPGLPGSYTIVSGDTLTNISQDFNITLDSLIAANTQIENPDAIDVGQIITVPVCPSSQCEAVGTYNIVAGDLFVDLAATYHTTIGQIKALNNNVNPSKLKVGQQIILPQDCKNVTTAVA.

The signal sequence occupies residues 1–18 (MQSMILFAAALMGAAVNG). Disulfide bonds link C36–C90, C64–C98, C109–C163, and C168–C220. Residues 42–86 (IKYTVVKGDTLTSIAKKFKSGICNIVSVNKLANPNLIELGATLII) form the LysM 1 domain. Positions 51, 53, 76, and 78 each coordinate chitin. 4 N-linked (GlcNAc...) asparagine glycosylation sites follow: N89, N95, N127, and N133. LysM domains are found at residues 115-160 (GSYT…IITV) and 172-216 (GTYN…QIIL). Chitin-binding residues include G179, L181, V183, P205, S206, and L208. N-linked (GlcNAc...) asparagine glycosylation occurs at N222.

It belongs to the secreted LysM effector family. Forms homodimers.

Its subcellular location is the secreted. Functionally, secreted effector that enables the plant pathogenic fungus to manipulate host defenses for successful infection. Binds chitine, but not to any other glycan, including the N-linked glycan chitobiose. Outcompetes host immune receptor for chitin binding through intrachain LysM dimerization. During infection, sequesters chitin oligosaccharides that are released from the cell walls of invading hyphae to prevent elicitation of host immunity. The sequence is that of Secreted LysM effector ECP6 from Passalora fulva (Tomato leaf mold).